A 1425-amino-acid polypeptide reads, in one-letter code: Protein NAP1 (1425 aa).

3 stretches are compositionally biased toward polar residues: residues 1-20 (MANSRQYYPSQDESMSPTSV), 1299-1312 (TPLSTASPYHSPSV), and 1320-1329 (SMKNSTTPQR). Disordered stretches follow at residues 1–24 (MANSRQYYPSQDESMSPTSVRSRE) and 1299–1425 (TPLS…KQHN). Low complexity predominate over residues 1362 to 1405 (SETGNSRNNENNNNNKQRGSSRRSGPLDYSSSHKGGSGSNSTGP).

This sequence belongs to the HEM-1/HEM-2 family. Binds PIR. Expressed in roots, root hairs, hypocotyls, cotyledons, stems, leaves, trichomes, and flowers.

Functionally, involved in regulation of actin and microtubule organization. Part of a WAVE complex that activates the Arp2/3 complex. This is Protein NAP1 (NAP1) from Arabidopsis thaliana (Mouse-ear cress).